The sequence spans 253 residues: Ubiquinone/menaquinone biosynthesis C-methyltransferase UbiE (253 aa).

S-adenosyl-L-methionine-binding positions include Thr-76, Asp-97, and 125 to 126 (NA).

It belongs to the class I-like SAM-binding methyltransferase superfamily. MenG/UbiE family.

The catalysed reaction is a 2-demethylmenaquinol + S-adenosyl-L-methionine = a menaquinol + S-adenosyl-L-homocysteine + H(+). It catalyses the reaction a 2-methoxy-6-(all-trans-polyprenyl)benzene-1,4-diol + S-adenosyl-L-methionine = a 5-methoxy-2-methyl-3-(all-trans-polyprenyl)benzene-1,4-diol + S-adenosyl-L-homocysteine + H(+). It functions in the pathway quinol/quinone metabolism; menaquinone biosynthesis; menaquinol from 1,4-dihydroxy-2-naphthoate: step 2/2. Its pathway is cofactor biosynthesis; ubiquinone biosynthesis. Its function is as follows. Methyltransferase required for the conversion of demethylmenaquinol (DMKH2) to menaquinol (MKH2) and the conversion of 2-polyprenyl-6-methoxy-1,4-benzoquinol (DDMQH2) to 2-polyprenyl-3-methyl-6-methoxy-1,4-benzoquinol (DMQH2). This Rhodopseudomonas palustris (strain ATCC BAA-98 / CGA009) protein is Ubiquinone/menaquinone biosynthesis C-methyltransferase UbiE.